Reading from the N-terminus, the 2145-residue chain is MAAFGLLSYEQRPLKRPRLGPPDVYPQDPKQKEDELTAVNVKQGFNNQPAFTGDEHGSARNIVINPSKIGAYFSSILAEKLKLNTFQDTGKKKPQVNAKDNYWLVTARSQSAIHSWFSDLAGNKPLSILAKKVPILSKKEDVFAYLAKYSVPMVRATWLIKMTCAYYSAISEAKIKKRQAPDPNLEWTQISTRYLREQLAKISDFYHMASSTGDGPVPVPPEVEQAMKQWEYNEKLAFHMFQEGMLEKHEYLTWILDVLEKIRPMDDDLLKLLLPLMLQYSDEFVQSAYLSRRLAYFCARRLSLLLSDSPNLLAAHSPHMMIGPNNSSIGAPSPGPPGPGMSPVQLAFSDFLSCAQHGPLVYGLSCMLQTVTLCCPSALVWNYSTNENKSANPGSPLDLLQVAPSSLPMPGGNTAFNQQVRARIYEVEQQIKQRGRAVEVRWSFDKCQESTAGVTISRVLHTLEVLDRHCFDRTDSSNSMETLYHKIFWANQNKDNQEVAPNDEAVVTLLCEWAVSCKRSGKHRAMAVAKLLEKRQAEIEAERCGESEVLDEKESISSSSLAGSSLPVFQNVLLRFLDTQAPSLSDPNSECEKVEFVNLVLLFCEFIRHDVFSHDAYMCTLISRGDLSVTASTRPRSPVGENADEHYSKDHDVKMEIFSPMPGESCENANTSLGRRMSVNCEKLVKREKPRELIFPSNYDLLRHLQYATHFPIPLDESSSHECNQRTILLYGVGKERDEARHQLKKITKDILKILNKKSTTETGVGDEGQKARKNKQETFPTLETVFTKLQLLSYFDQHQVTSQISNNVLEQITSFASGTSYHLPLAHHIQLIFDLMEPALNINGLIDFAIQLLNELSVVEAELLLKSSSLAGSYTTGLCVCIVAVLRRYHSCLILNPDQTAQVFEGLCGVVKHVVNPSECSSPERCILAYLYDLYVSCSHLRSKFGDLFSSACSKVKQTIYNNVMPANSNLRWDPDFMMDFIENPSARSINYSMLGKILSDNAANRYSFVCNTLMNVCMGHQDAGRINDIANFSSELTACCTVLSSEWLGVLKALCCSSNHVWGFNDVLCTVDVSDLSFHDSLATFIAILIARQCFSLEDVVQHVALPSLLAAACGDADAEPGARMTCRLLLHLFRAPQACFLPQATGKPFPGIRSSCDRHLLAAAHNSIEVGAVFAVLKAIMMLGDAKIGNNSVSSLKNDDFTMRGLRCDGNADDIWTASQNPKSCGKSISIETANLREYARYVLRTICQQEWVGEHCLKEPERLCTDKELILDPVLSNMQAQKLLQLICYPHGIKECTEGDNLQRQHIKRILQNLEQWTLRQSWLELQLMIKQCLKDPGSGSVAEMNNLLDNIAKATIEVFQQSADLNNSSNSGMSLFNPNSIGSADTSSTRQNGIKTFLSSSERRGVWLVAPLIARLPTSVQGRVLKAAGEELEKGQHLGSSSKKERDRQKQKSMSLLSQQPFLSLVLTCLKGQDEQREGLLTSLQNQVNQILSNWREERYQDDIKARQMMHEALQLRLNLVGGMFDTVQRSTQWTTDWALLLLQIITSGTVDMHTNNELFTTVLDMLGVLINGTLASDLSNASPGGSEENKRAYMNLVKKLKKELGDKRSESIDKVRQLLPLPKQTCDVITCEPMGSLIDTKGNKIAGFDSIDKKQGLQVSTKQKVSPWDLFEGQKNPAPLSWAWFGTVRVDRRVIKYEEQHHLLLYHTHPMPKPRSYYLQPLPLPPEEEEEEPTSPVSQEPERKSAELSDQGKTTTDEEKKTKGRKRKTKSSSRVDEYPQSNIYRVPPNYSPISSQMMHHPQSTLWGYNLVGQPQQPGFFLQNQSLTPGGSRLDPAGSFVPTNTKQALSNMLQRRSGAMMQPPSLHAITSQQQLIQMKLLQQQQQQRLLRQAQTRPFQQGQPGDQAALFAAQARPSPQLPQYPGLQQAQTMPQGYTMYGTQMPLQQTSQQQAGSVVLSPSYNSRAYPAAHSNPVLMERLRQIQQQPSGYVQQQASPYLQPLTGSQRLNHQALQQSPLVGGGIDAVLTSAHPNLPSVPLPQDPMRPRQPQVRQQQRLLQMQQPQQPQPQQPPQPQQSSQSQSQTLGLQAMQPQQPLFPRQGLQQTQQQQQTAALVRQLQKQLSSNQPQQGVTPYGHPSHF.

Residues 1–30 (MAAFGLLSYEQRPLKRPRLGPPDVYPQDPK) are disordered. Threonine 462 carries the post-translational modification Phosphothreonine. Over residues 1436-1455 (ELEKGQHLGSSSKKERDRQK) the composition is skewed to basic and acidic residues. Disordered regions lie at residues 1436–1460 (ELEK…KSMS), 1721–1802 (RSYY…ISSQ), and 2029–2145 (DAVL…PSHF). Basic residues predominate over residues 1768 to 1777 (TKGRKRKTKS). Over residues 2052–2069 (RQPQVRQQQRLLQMQQPQ) the composition is skewed to low complexity. The span at 2070–2079 (QPQPQQPPQP) shows a compositional bias: pro residues. A compositionally biased stretch (polar residues) spans 2089–2099 (TLGLQAMQPQQ). Residues 2104-2124 (RQGLQQTQQQQQTAALVRQLQ) are compositionally biased toward low complexity. Positions 2125–2136 (KQLSSNQPQQGV) are enriched in polar residues.

This sequence belongs to the Mediator complex subunit 12 family. May be a component of the Mediator complex, which is known to be composed of MED1, MED4, MED6, MED7, MED8, MED9, MED10, MED11, MED12, MED13, MED13L, MED14, MED15, MED16, MED17, MED18, MED19, MED20, MED21, MED22, MED23, MED24, MED25, MED26, MED27, MED29, MED30, MED31, CCNC, CDK8 and CDC2L6/CDK11. The MED12, MED13, CCNC and CDK8 subunits form a distinct module termed the CDK8 module. Mediator containing the CDK8 module is less active than Mediator lacking this module in supporting transcriptional activation. Individual preparations of the Mediator complex lacking one or more distinct subunits have been variously termed ARC, CRSP, DRIP, PC2, SMCC and TRAP.

It localises to the nucleus. May be a component of the Mediator complex, a coactivator involved in the regulated transcription of nearly all RNA polymerase II-dependent genes. Mediator functions as a bridge to convey information from gene-specific regulatory proteins to the basal RNA polymerase II transcription machinery. Mediator is recruited to promoters by direct interactions with regulatory proteins and serves as a scaffold for the assembly of a functional preinitiation complex with RNA polymerase II and the general transcription factors. The sequence is that of Mediator of RNA polymerase II transcription subunit 12-like protein (MED12L) from Homo sapiens (Human).